The following is a 167-amino-acid chain: Small ribosomal subunit protein uS5 (167 aa).

The region spanning 12 to 75 (LQEKLIAVNR…EKARRSMVTI (64 aa)) is the S5 DRBM domain.

The protein belongs to the universal ribosomal protein uS5 family. Part of the 30S ribosomal subunit. Contacts proteins S4 and S8.

Its function is as follows. With S4 and S12 plays an important role in translational accuracy. Functionally, located at the back of the 30S subunit body where it stabilizes the conformation of the head with respect to the body. The polypeptide is Small ribosomal subunit protein uS5 (Vibrio cholerae serotype O1 (strain ATCC 39541 / Classical Ogawa 395 / O395)).